Here is a 49-residue protein sequence, read N- to C-terminus: uncharacterized protein (49 aa).

Residues 31–48 (PDLYTIIVSYFSIFSLFF) form a helical membrane-spanning segment.

It is found in the membrane. This is an uncharacterized protein from Saccharomyces cerevisiae (strain ATCC 204508 / S288c) (Baker's yeast).